Consider the following 292-residue polypeptide: Phosphoribulokinase 2 (292 aa).

Residue 12-20 coordinates ATP; the sequence is GSSGAGTST.

It belongs to the phosphoribulokinase family.

The enzyme catalyses D-ribulose 5-phosphate + ATP = D-ribulose 1,5-bisphosphate + ADP + H(+). Its pathway is carbohydrate biosynthesis; Calvin cycle. This is Phosphoribulokinase 2 (prkB) from Cereibacter sphaeroides (Rhodobacter sphaeroides).